We begin with the raw amino-acid sequence, 279 residues long: MKIELAKSYGFCFGVKRAIKIAENSKNASTIGELIHNSLEIDRLKNNFNVKTLKDISELKNEKKAIIRTHGITKEGLANLKSRDVEIIDATCPFVTKPQQIVEKMSSEGYEIVFFGDINHPEVKGVMSYSSKNVYVILDESELETVKLPSKIAVVSQTTKKIEKFTKIVSYLMQRVKEVRVFNTICNATLENQEAVRELSSRADVMVIIGGKNSSNTKQLYLISKNLCPDSYLIESENELELKWFQNKKLCGISAGASTPEWVIQNVINKLENLTHKDS.

Cys-12 is a binding site for [4Fe-4S] cluster. Residues His-36 and His-70 each coordinate (2E)-4-hydroxy-3-methylbut-2-enyl diphosphate. Residues His-36 and His-70 each coordinate dimethylallyl diphosphate. Positions 36 and 70 each coordinate isopentenyl diphosphate. Cys-92 contributes to the [4Fe-4S] cluster binding site. His-120 contributes to the (2E)-4-hydroxy-3-methylbut-2-enyl diphosphate binding site. His-120 contacts dimethylallyl diphosphate. His-120 contacts isopentenyl diphosphate. Catalysis depends on Glu-122, which acts as the Proton donor. Position 158 (Thr-158) interacts with (2E)-4-hydroxy-3-methylbut-2-enyl diphosphate. A [4Fe-4S] cluster-binding site is contributed by Cys-186. Residues Ser-214, Ser-215, Asn-216, and Ser-258 each coordinate (2E)-4-hydroxy-3-methylbut-2-enyl diphosphate. The dimethylallyl diphosphate site is built by Ser-214, Ser-215, Asn-216, and Ser-258. Isopentenyl diphosphate is bound by residues Ser-214, Ser-215, Asn-216, and Ser-258.

Belongs to the IspH family. [4Fe-4S] cluster is required as a cofactor.

It carries out the reaction isopentenyl diphosphate + 2 oxidized [2Fe-2S]-[ferredoxin] + H2O = (2E)-4-hydroxy-3-methylbut-2-enyl diphosphate + 2 reduced [2Fe-2S]-[ferredoxin] + 2 H(+). The catalysed reaction is dimethylallyl diphosphate + 2 oxidized [2Fe-2S]-[ferredoxin] + H2O = (2E)-4-hydroxy-3-methylbut-2-enyl diphosphate + 2 reduced [2Fe-2S]-[ferredoxin] + 2 H(+). It participates in isoprenoid biosynthesis; dimethylallyl diphosphate biosynthesis; dimethylallyl diphosphate from (2E)-4-hydroxy-3-methylbutenyl diphosphate: step 1/1. It functions in the pathway isoprenoid biosynthesis; isopentenyl diphosphate biosynthesis via DXP pathway; isopentenyl diphosphate from 1-deoxy-D-xylulose 5-phosphate: step 6/6. Catalyzes the conversion of 1-hydroxy-2-methyl-2-(E)-butenyl 4-diphosphate (HMBPP) into a mixture of isopentenyl diphosphate (IPP) and dimethylallyl diphosphate (DMAPP). Acts in the terminal step of the DOXP/MEP pathway for isoprenoid precursor biosynthesis. This Campylobacter fetus subsp. fetus (strain 82-40) protein is 4-hydroxy-3-methylbut-2-enyl diphosphate reductase.